A 195-amino-acid polypeptide reads, in one-letter code: Pyridoxal 5'-phosphate synthase subunit PdxT (195 aa).

53–55 (GES) contributes to the L-glutamine binding site. The Nucleophile role is filled by Cys-82. L-glutamine-binding positions include Arg-108 and 134–135 (IR). Catalysis depends on charge relay system residues His-173 and Glu-175.

Belongs to the glutaminase PdxT/SNO family. In the presence of PdxS, forms a dodecamer of heterodimers. Only shows activity in the heterodimer.

It carries out the reaction aldehydo-D-ribose 5-phosphate + D-glyceraldehyde 3-phosphate + L-glutamine = pyridoxal 5'-phosphate + L-glutamate + phosphate + 3 H2O + H(+). The catalysed reaction is L-glutamine + H2O = L-glutamate + NH4(+). Its pathway is cofactor biosynthesis; pyridoxal 5'-phosphate biosynthesis. Functionally, catalyzes the hydrolysis of glutamine to glutamate and ammonia as part of the biosynthesis of pyridoxal 5'-phosphate. The resulting ammonia molecule is channeled to the active site of PdxS. The chain is Pyridoxal 5'-phosphate synthase subunit PdxT from Methanobrevibacter smithii (strain ATCC 35061 / DSM 861 / OCM 144 / PS).